Here is a 239-residue protein sequence, read N- to C-terminus: Lipoprotein-releasing system ATP-binding protein LolD (239 aa).

Residues 10 to 239 (VELSGVRKDY…ADGPHRRSGA (230 aa)) form the ABC transporter domain. Position 46–53 (46–53 (GPSGSGKS)) interacts with ATP.

The protein belongs to the ABC transporter superfamily. Lipoprotein translocase (TC 3.A.1.125) family. In terms of assembly, the complex is composed of two ATP-binding proteins (LolD) and two transmembrane proteins (LolC and LolE).

It is found in the cell inner membrane. In terms of biological role, part of the ABC transporter complex LolCDE involved in the translocation of mature outer membrane-directed lipoproteins, from the inner membrane to the periplasmic chaperone, LolA. Responsible for the formation of the LolA-lipoprotein complex in an ATP-dependent manner. This is Lipoprotein-releasing system ATP-binding protein LolD from Anaeromyxobacter dehalogenans (strain 2CP-C).